We begin with the raw amino-acid sequence, 394 residues long: NAD(P)H-quinone oxidoreductase subunit H (394 aa).

It belongs to the complex I 49 kDa subunit family. NDH-1 can be composed of about 15 different subunits; different subcomplexes with different compositions have been identified which probably have different functions.

It is found in the cellular thylakoid membrane. It carries out the reaction a plastoquinone + NADH + (n+1) H(+)(in) = a plastoquinol + NAD(+) + n H(+)(out). The catalysed reaction is a plastoquinone + NADPH + (n+1) H(+)(in) = a plastoquinol + NADP(+) + n H(+)(out). Its function is as follows. NDH-1 shuttles electrons from an unknown electron donor, via FMN and iron-sulfur (Fe-S) centers, to quinones in the respiratory and/or the photosynthetic chain. The immediate electron acceptor for the enzyme in this species is believed to be plastoquinone. Couples the redox reaction to proton translocation, and thus conserves the redox energy in a proton gradient. Cyanobacterial NDH-1 also plays a role in inorganic carbon-concentration. This Synechococcus sp. (strain CC9902) protein is NAD(P)H-quinone oxidoreductase subunit H.